The sequence spans 188 residues: Putative adenylate kinase (188 aa).

The ATP site is built by glycine 10, glycine 12, lysine 13, serine 14, and threonine 15. The NMP stretch occupies residues 30-53 (HVSSFLIQNKAFSEYDELRQSYVI). The tract at residues 103 to 113 (RRGWGELKIAE) is LID. The ATP site is built by arginine 104 and lysine 142.

This sequence belongs to the adenylate kinase family. AK6 subfamily. As to quaternary structure, interacts with uS11. Not a structural component of 40S pre-ribosomes, but transiently interacts with them by binding to uS11.

It catalyses the reaction AMP + ATP = 2 ADP. It carries out the reaction ATP + H2O = ADP + phosphate + H(+). Broad-specificity nucleoside monophosphate (NMP) kinase that catalyzes the reversible transfer of the terminal phosphate group between nucleoside triphosphates and monophosphates. Also has ATPase activity. Involved in the late maturation steps of the 30S ribosomal particles, specifically 16S rRNA maturation. While NMP activity is not required for ribosome maturation, ATPase activity is. Associates transiently with small ribosomal subunit protein uS11. ATP hydrolysis breaks the interaction with uS11. May temporarily remove uS11 from the ribosome to enable a conformational change of the ribosomal RNA that is needed for the final maturation step of the small ribosomal subunit. In Sulfurisphaera tokodaii (strain DSM 16993 / JCM 10545 / NBRC 100140 / 7) (Sulfolobus tokodaii), this protein is Putative adenylate kinase.